We begin with the raw amino-acid sequence, 511 residues long: Bifunctional purine biosynthesis protein PurH (511 aa).

Positions 1-145 (MKKRALVSVS…KNHKFVSVIV (145 aa)) constitute an MGS-like domain.

This sequence belongs to the PurH family.

The enzyme catalyses (6R)-10-formyltetrahydrofolate + 5-amino-1-(5-phospho-beta-D-ribosyl)imidazole-4-carboxamide = 5-formamido-1-(5-phospho-D-ribosyl)imidazole-4-carboxamide + (6S)-5,6,7,8-tetrahydrofolate. It catalyses the reaction IMP + H2O = 5-formamido-1-(5-phospho-D-ribosyl)imidazole-4-carboxamide. The protein operates within purine metabolism; IMP biosynthesis via de novo pathway; 5-formamido-1-(5-phospho-D-ribosyl)imidazole-4-carboxamide from 5-amino-1-(5-phospho-D-ribosyl)imidazole-4-carboxamide (10-formyl THF route): step 1/1. It participates in purine metabolism; IMP biosynthesis via de novo pathway; IMP from 5-formamido-1-(5-phospho-D-ribosyl)imidazole-4-carboxamide: step 1/1. The chain is Bifunctional purine biosynthesis protein PurH from Bacillus cytotoxicus (strain DSM 22905 / CIP 110041 / 391-98 / NVH 391-98).